A 159-amino-acid chain; its full sequence is UPF0262 protein TM1040_3562 (159 aa).

The tract at residues 1–21 (MSRISQIELDDRNLPPPTPEI) is disordered.

Belongs to the UPF0262 family.

This is UPF0262 protein TM1040_3562 from Ruegeria sp. (strain TM1040) (Silicibacter sp.).